The primary structure comprises 333 residues: Probable G-protein coupled receptor 174 (333 aa).

The Extracellular segment spans residues 1-27; sequence MPANYTCTRPDGDNTDFRYFIYAVTYT. An N-linked (GlcNAc...) asparagine glycan is attached at asparagine 4. Residues 28 to 48 form a helical membrane-spanning segment; the sequence is VILVPGLIGNILALWVFYGYM. At 49-53 the chain is on the cytoplasmic side; that stretch reads KETKR. Residues 54 to 74 form a helical membrane-spanning segment; the sequence is AVIFMINLAIADLLQVLSLPL. Topologically, residues 75–91 are extracellular; that stretch reads RIFYYLNHDWPFGPGLC. A disulfide bridge links cysteine 91 with cysteine 168. The chain crosses the membrane as a helical span at residues 92 to 112; it reads MFCFYLKYVNMYASIYFLVCI. The Cytoplasmic portion of the chain corresponds to 113–134; sequence SVRRFWFLMYPFRFHDCKQKYD. A helical transmembrane segment spans residues 135–155; that stretch reads LYISIAGWLIICLACVLFPLL. At 156 to 182 the chain is on the extracellular side; it reads RTSDDTSGNRTKCFVDLPTRNVNLAQS. N-linked (GlcNAc...) asparagine glycosylation is present at asparagine 164. The helical transmembrane segment at 183–203 threads the bilayer; it reads VVMMTIGELIGFVTPLLIVLY. The Cytoplasmic segment spans residues 204-231; that stretch reads CTWKTVLSLQDKYPMAQDLGEKQKALKM. A helical transmembrane segment spans residues 232–252; the sequence is ILTCAGVFLICFAPYHFSFPL. Over 253–269 the chain is Extracellular; sequence DFLVKSNEIKSCLARRV. The helical transmembrane segment at 270-290 threads the bilayer; sequence ILIFHSVALCLASLNSCLDPV. Topologically, residues 291 to 333 are cytoplasmic; the sequence is IYYFSTNEFRRRLSRQDLHDSIQLHAKSFVSNHTASTMTPELC.

Belongs to the G-protein coupled receptor 1 family. As to quaternary structure, interacts with GNA13. Interacts with CCL21.

It localises to the cell membrane. Functionally, G-protein-coupled receptor of lysophosphatidylserine (LysoPS) that plays different roles in immune response. Plays a negative role in regulatory T-cell accumulation and homeostasis. Under inflammatory conditions where LysoPS production increases, contributes to the down-regulation of regulatory T-cell activity to favor effector response. Mediates the suppression of IL-2 production in activated T-lymphocytes leading to inhibition of growth, proliferation and differentiation of T-cells. Mechanistically, acts via G(s)-containing heterotrimeric G proteins to trigger elevated cyclic AMP levels and protein kinase A/PKA activity, which may in turn act to antagonize proximal TCR signaling. Plays an important role in the initial period of sepsis through the regulation of macrophage polarization and pro- and anti-inflammatory cytokine secretions. Upon testosterone treatment, acts as a receptor for CCL21 and subsequently triggers through G(q)-alpha and G(12)/G(13) proteins a calcium flux leading to chemotactic effects on activated B-cells. Signals via GNA13 and PKA to promote CD86 up-regulation by follicular B-cells. This Homo sapiens (Human) protein is Probable G-protein coupled receptor 174 (GPR174).